Consider the following 216-residue polypeptide: uncharacterized protein (216 aa).

The region spanning 8-63 (LKTLMTSVHINASELARRTGIAQPIIHRLSTGQNTNPKLATIKPIARYFMVNISQL) is the HTH cro/C1-type domain. The segment at residues 19 to 38 (ASELARRTGIAQPIIHRLST) is a DNA-binding region (H-T-H motif).

This is an uncharacterized protein from Coxiella burnetii (strain RSA 493 / Nine Mile phase I).